Consider the following 355-residue polypeptide: Chromosomal protein D1 (355 aa).

Met1 carries the N-acetylmethionine modification. Residues 1 to 355 (MEEVAVKKRG…NYNDSESVAA (355 aa)) are disordered. The a.T hook 1 DNA-binding region spans 7 to 14 (KKRGRPSK). Ser30 is modified (phosphoserine). DNA-binding regions (a.T hook) lie at residues 34–41 (KKRGRPAK) and 60–67 (KIQNDEDP). The segment covering 64–77 (DEDPEDEGEEDGDG) has biased composition (acidic residues). Phosphoserine occurs at positions 80, 88, and 89. A DNA-binding region (a.T hook 4) is located at residues 94–101 (KGRGRPKS). Phosphoserine occurs at positions 107, 109, and 112. A Phosphothreonine modification is found at Thr115. Residue Ser118 is modified to Phosphoserine. Positions 119 to 130 (AKKRKAGRPKKH) are enriched in basic residues. Residues 122–129 (RKAGRPKK) constitute a DNA-binding region (a.T hook 5). Phosphoserine; by CK2 is present on residues Ser133 and Ser135. The span at 135–147 (SENEDDQDEDDDG) shows a compositional bias: acidic residues. Ser149, Ser150, Ser161, Ser164, and Ser170 each carry phosphoserine. Positions 155–162 (RPVGRPSA) form a DNA-binding region, a.T hook 6. The a.T hook 7 DNA-binding region spans 174–181 (RGLGRPKK). At Ser186 the chain carries Phosphoserine; by CK2. The segment at residues 196-203 (KKRGRPPQ) is a DNA-binding region (a.T hook 8). Ser208 bears the Phosphoserine mark. A DNA-binding region (a.T hook 9) is located at residues 219-226 (RPRGRPKA). Acidic residues predominate over residues 237–247 (NDDDQDDENSG). A phosphoserine mark is found at Ser246, Ser252, and Ser253. 2 consecutive DNA-binding regions (a.T hook) follow at residues 262–269 (KKRGRPSL) and 281–288 (KPRSRPAK). Phosphoserine occurs at positions 299 and 307. The span at 307–318 (SKKESNDEDRAV) shows a compositional bias: basic and acidic residues. Ser311 is subject to Phosphoserine; by CK2. Thr321 carries the phosphothreonine modification. At Ser332 the chain carries Phosphoserine; by CK2. Residues 345–355 (DNYNDSESVAA) are compositionally biased toward polar residues.

Its subcellular location is the nucleus. It is found in the chromosome. Its function is as follows. This satellite DNA-associated protein is a double-stranded DNA binding protein specific for tracts of pure at DNA. It may play a role in organizing the higher-order structure of euchromatin as well as heterochromatin. In Drosophila melanogaster (Fruit fly), this protein is Chromosomal protein D1 (D1).